A 128-amino-acid chain; its full sequence is uncharacterized protein (128 aa).

It is found in the mitochondrion. This is an uncharacterized protein from Saccharomyces cerevisiae (strain ATCC 204508 / S288c) (Baker's yeast).